We begin with the raw amino-acid sequence, 399 residues long: Acetate kinase 2 (399 aa).

Residue N10 coordinates Mg(2+). K17 contacts ATP. A substrate-binding site is contributed by R89. D146 serves as the catalytic Proton donor/acceptor. ATP contacts are provided by residues 206 to 210, 281 to 283, and 329 to 333; these read HLGNG, DCR, and GIGEN. E384 provides a ligand contact to Mg(2+).

Belongs to the acetokinase family. As to quaternary structure, homodimer. The cofactor is Mg(2+). It depends on Mn(2+) as a cofactor.

It is found in the cytoplasm. The enzyme catalyses acetate + ATP = acetyl phosphate + ADP. It participates in metabolic intermediate biosynthesis; acetyl-CoA biosynthesis; acetyl-CoA from acetate: step 1/2. Functionally, catalyzes the formation of acetyl phosphate from acetate and ATP. Can also catalyze the reverse reaction. This is Acetate kinase 2 from Neisseria meningitidis serogroup B (strain ATCC BAA-335 / MC58).